The following is a 150-amino-acid chain: Phosphopantetheine adenylyltransferase (150 aa).

Ser10 is a binding site for substrate. Residues 10-11 (SF) and His18 contribute to the ATP site. Substrate contacts are provided by Lys42, Thr74, and Arg88. ATP is bound by residues 89-91 (GLR), Glu99, and 124-130 (LAYISSS).

This sequence belongs to the bacterial CoaD family. As to quaternary structure, homohexamer. Mg(2+) serves as cofactor.

The protein localises to the cytoplasm. The enzyme catalyses (R)-4'-phosphopantetheine + ATP + H(+) = 3'-dephospho-CoA + diphosphate. Its pathway is cofactor biosynthesis; coenzyme A biosynthesis; CoA from (R)-pantothenate: step 4/5. Functionally, reversibly transfers an adenylyl group from ATP to 4'-phosphopantetheine, yielding dephospho-CoA (dPCoA) and pyrophosphate. The polypeptide is Phosphopantetheine adenylyltransferase (Cytophaga hutchinsonii (strain ATCC 33406 / DSM 1761 / CIP 103989 / NBRC 15051 / NCIMB 9469 / D465)).